Here is a 279-residue protein sequence, read N- to C-terminus: HTH-type transcriptional regulator HdfR (279 aa).

In terms of domain architecture, HTH lysR-type spans M1–T58. The H-T-H motif DNA-binding region spans F18–R37.

Belongs to the LysR transcriptional regulatory family.

Negatively regulates the transcription of the flagellar master operon flhDC by binding to the upstream region of the operon. The polypeptide is HTH-type transcriptional regulator HdfR (Escherichia coli O7:K1 (strain IAI39 / ExPEC)).